The following is a 322-amino-acid chain: 4-diphosphocytidyl-2-C-methyl-D-erythritol kinase (322 aa).

The active site involves lysine 25. 110-120 (PVAGGMAGGSA) contacts ATP. Aspartate 152 is a catalytic residue.

This sequence belongs to the GHMP kinase family. IspE subfamily.

The enzyme catalyses 4-CDP-2-C-methyl-D-erythritol + ATP = 4-CDP-2-C-methyl-D-erythritol 2-phosphate + ADP + H(+). The protein operates within isoprenoid biosynthesis; isopentenyl diphosphate biosynthesis via DXP pathway; isopentenyl diphosphate from 1-deoxy-D-xylulose 5-phosphate: step 3/6. Functionally, catalyzes the phosphorylation of the position 2 hydroxy group of 4-diphosphocytidyl-2C-methyl-D-erythritol. This Mycolicibacterium gilvum (strain PYR-GCK) (Mycobacterium gilvum (strain PYR-GCK)) protein is 4-diphosphocytidyl-2-C-methyl-D-erythritol kinase.